We begin with the raw amino-acid sequence, 85 residues long: UPF0386 protein HNE_3437 (85 aa).

This sequence belongs to the UPF0386 family.

The polypeptide is UPF0386 protein HNE_3437 (Hyphomonas neptunium (strain ATCC 15444)).